Consider the following 531-residue polypeptide: Bifunctional protein TrpGD (531 aa).

One can recognise a Glutamine amidotransferase type-1 domain in the interval 3–196 (DILLLDNIDS…LAWAQQKLEP (194 aa)). Residue 57-59 (GPG) coordinates L-glutamine. C84 serves as the catalytic Nucleophile; for GATase activity. L-glutamine-binding positions include Q88 and 134–135 (SL). Active-site for GATase activity residues include H170 and E172. An anthranilate phosphoribosyltransferase region spans residues 202-531 (PILEKLYQAQ…DRVTALAARG (330 aa)).

In the C-terminal section; belongs to the anthranilate phosphoribosyltransferase family. Heterotetramer consisting of two non-identical subunits: a beta subunit (TrpG) and a large alpha subunit (TrpE).

The enzyme catalyses chorismate + L-glutamine = anthranilate + pyruvate + L-glutamate + H(+). It carries out the reaction N-(5-phospho-beta-D-ribosyl)anthranilate + diphosphate = 5-phospho-alpha-D-ribose 1-diphosphate + anthranilate. It functions in the pathway amino-acid biosynthesis; L-tryptophan biosynthesis; L-tryptophan from chorismate: step 1/5. The protein operates within amino-acid biosynthesis; L-tryptophan biosynthesis; L-tryptophan from chorismate: step 2/5. With respect to regulation, cooperatively feedback inhibited by tryptophan. Its function is as follows. Part of a heterotetrameric complex that catalyzes the two-step biosynthesis of anthranilate, an intermediate in the biosynthesis of L-tryptophan. In the first step, the glutamine-binding beta subunit (TrpG) of anthranilate synthase (AS) provides the glutamine amidotransferase activity which generates ammonia as a substrate that, along with chorismate, is used in the second step, catalyzed by the large alpha subunit of AS (TrpE) to produce anthranilate. In the absence of TrpG, TrpE can synthesize anthranilate directly from chorismate and high concentrations of ammonia. In addition to synthesizing anthranilate, it also catalyzes the second step of the pathway, the transfer of the phosphoribosyl group of 5-phosphorylribose-1-pyrophosphate (PRPP) to anthranilate. The protein is Bifunctional protein TrpGD (trpGD) of Escherichia coli (strain K12).